Consider the following 241-residue polypeptide: tRNA pseudouridine synthase A (241 aa).

The active-site Nucleophile is D51. Residue Y110 participates in substrate binding.

Belongs to the tRNA pseudouridine synthase TruA family. As to quaternary structure, homodimer.

The enzyme catalyses uridine(38/39/40) in tRNA = pseudouridine(38/39/40) in tRNA. Formation of pseudouridine at positions 38, 39 and 40 in the anticodon stem and loop of transfer RNAs. This is tRNA pseudouridine synthase A from Campylobacter jejuni subsp. jejuni serotype O:23/36 (strain 81-176).